We begin with the raw amino-acid sequence, 272 residues long: Peptidoglycolipid exporter Gap (272 aa).

6 helical membrane-spanning segments follow: residues 5–25 (ILGL…ILLV), 36–56 (VVFW…PLFV), 79–99 (IEPF…VIAL), 171–191 (LWVA…VLLV), 206–226 (IIAV…TLLS), and 252–272 (ILLV…LGVI).

Belongs to the peptidoglycolipid addressing protein (GAP) (TC 2.A.116) family.

It is found in the cell inner membrane. Functionally, required for the transport of peptidoglycolipids (GPLs) to the cell surface. This is Peptidoglycolipid exporter Gap from Mycolicibacterium smegmatis (strain ATCC 700084 / mc(2)155) (Mycobacterium smegmatis).